Consider the following 83-residue polypeptide: Keratin-associated protein 21-2 (83 aa).

Interacts with hair keratins.

In the hair cortex, hair keratin intermediate filaments are embedded in an interfilamentous matrix, consisting of hair keratin-associated proteins (KRTAP), which are essential for the formation of a rigid and resistant hair shaft through their extensive disulfide bond cross-linking with abundant cysteine residues of hair keratins. The matrix proteins include the high-sulfur and high-glycine-tyrosine keratins. This chain is Keratin-associated protein 21-2 (KRTAP21-2), found in Homo sapiens (Human).